A 626-amino-acid polypeptide reads, in one-letter code: tRNA uridine 5-carboxymethylaminomethyl modification enzyme MnmG (626 aa).

13 to 18 (GGGHAG) contributes to the FAD binding site. 273-287 (GPRYCPSIEDKIHRF) is a binding site for NAD(+).

The protein belongs to the MnmG family. In terms of assembly, homodimer. Heterotetramer of two MnmE and two MnmG subunits. FAD is required as a cofactor.

The protein resides in the cytoplasm. Its function is as follows. NAD-binding protein involved in the addition of a carboxymethylaminomethyl (cmnm) group at the wobble position (U34) of certain tRNAs, forming tRNA-cmnm(5)s(2)U34. This Acinetobacter baumannii (strain AYE) protein is tRNA uridine 5-carboxymethylaminomethyl modification enzyme MnmG.